A 400-amino-acid polypeptide reads, in one-letter code: Succinate--glutarate CoA-transferase (400 aa).

D181 acts as the Nucleophile in catalysis.

Belongs to the CoA-transferase III family.

It catalyses the reaction glutarate + succinyl-CoA = glutaryl-CoA + succinate. It participates in amino-acid degradation. It functions in the pathway cofactor biosynthesis; biotin biosynthesis. In terms of biological role, is involved in L-lysine degradation and provides glutaryl-CoA for biotin synthesis. Catalyzes the conversion of glutarate to glutaryl-CoA via the transfer of CoA from succinyl-CoA. The chain is Succinate--glutarate CoA-transferase from Agrobacterium fabrum (strain C58 / ATCC 33970) (Agrobacterium tumefaciens (strain C58)).